A 363-amino-acid polypeptide reads, in one-letter code: p21-activated protein kinase-interacting protein 1-like (363 aa).

WD repeat units lie at residues 38-75 (AHTASVSVLAVNNRFVATGSRDETIQIYDMKKKVEHGA), 78-116 (HHNGTITCLEFYGNTHLLSGAEDGLICVWNTKKWECQQT), 119-158 (AHKGQVLSLSIHPSGKLALSVGTDKTLRTWNLVEGRSAFI), 200-238 (NNPKRISSAQFITDALIAVAGDEEVIRLYDTASQKCVCE), and 241-282 (AHEN…VQTS). Residues 309-363 (KEKSNTAVTASAVKDCDRPKKKKAQNETTDKEASETQVVHKKRKPETKQKKKKPS) form a disordered region. Residues 322–342 (KDCDRPKKKKAQNETTDKEAS) show a composition bias toward basic and acidic residues. A compositionally biased stretch (basic residues) spans 347 to 363 (VHKKRKPETKQKKKKPS).

The protein localises to the nucleus. The protein resides in the nucleolus. Its function is as follows. Negatively regulates the PAK1 kinase. PAK1 is a member of the PAK kinase family, which has been shown to play a positive role in the regulation of signaling pathways involving MAPK8 and RELA. PAK1 exists as an inactive homodimer, which is activated by binding of small GTPases such as CDC42 to an N-terminal regulatory domain. PAK1IP1 also binds to the N-terminus of PAK1, and inhibits the specific activation of PAK1 by CDC42. May be involved in ribosomal large subunit assembly. This Xenopus laevis (African clawed frog) protein is p21-activated protein kinase-interacting protein 1-like (pak1ip1).